The primary structure comprises 245 residues: Thiopurine S-methyltransferase (245 aa).

S14 carries the phosphoserine modification. An S-adenosyl-L-methionine-binding site is contributed by W29–F40. F40 is a binding site for substrate. Residue K58 is modified to N6-acetyllysine. S-adenosyl-L-methionine contacts are provided by residues L69, E90, S134–I135, and R152.

This sequence belongs to the class I-like SAM-binding methyltransferase superfamily. TPMT family. Monomer.

Its subcellular location is the cytoplasm. The catalysed reaction is S-adenosyl-L-methionine + a thiopurine = S-adenosyl-L-homocysteine + a thiopurine S-methylether.. It carries out the reaction mercaptopurine + S-adenosyl-L-methionine = 6-methylthiopurine + S-adenosyl-L-homocysteine + H(+). The enzyme catalyses 6-thioguanine + S-adenosyl-L-methionine = 6-methylthioguanine + S-adenosyl-L-homocysteine + H(+). Inhibited by S-adenosyl-L-homocysteine (SAH). Catalyzes the S-methylation of thiopurine drugs such as 6-mercaptopurine (also called mercaptopurine, 6-MP or its brand name Purinethol) and 6-thioguanine (also called tioguanine or 6-TG) using S-adenosyl-L-methionine as the methyl donor. TPMT activity modulates the cytotoxic effects of thiopurine prodrugs. A natural substrate for this enzyme has yet to be identified. In Homo sapiens (Human), this protein is Thiopurine S-methyltransferase (TPMT).